The chain runs to 167 residues: Large ribosomal subunit protein uL10 (167 aa).

The protein belongs to the universal ribosomal protein uL10 family. Part of the ribosomal stalk of the 50S ribosomal subunit. The N-terminus interacts with L11 and the large rRNA to form the base of the stalk. The C-terminus forms an elongated spine to which L12 dimers bind in a sequential fashion forming a multimeric L10(L12)X complex.

Its function is as follows. Forms part of the ribosomal stalk, playing a central role in the interaction of the ribosome with GTP-bound translation factors. This is Large ribosomal subunit protein uL10 from Alkaliphilus oremlandii (strain OhILAs) (Clostridium oremlandii (strain OhILAs)).